The sequence spans 1134 residues: Error-prone DNA polymerase (1134 aa).

The interval Met1–Gln33 is disordered.

This sequence belongs to the DNA polymerase type-C family. DnaE2 subfamily.

The protein localises to the cytoplasm. The enzyme catalyses DNA(n) + a 2'-deoxyribonucleoside 5'-triphosphate = DNA(n+1) + diphosphate. DNA polymerase involved in damage-induced mutagenesis and translesion synthesis (TLS). It is not the major replicative DNA polymerase. The protein is Error-prone DNA polymerase of Cutibacterium acnes (strain DSM 16379 / KPA171202) (Propionibacterium acnes).